The primary structure comprises 587 residues: Capsid vertex component 2 (587 aa).

Residues 1-53 (MAEYVNYVLGSLYVSDTATSTIPTDVRNFIAPPFPLNFWSGPTFTVSSNTRAD) form an interaction with major capsid protein/MCP region. The segment at 113 to 132 (SADAATPQVNASEADQRPDN) is disordered.

Belongs to the herpesviridae CVC2 protein family. Heterodimerizes with CVC1. Interacts with major capsid protein/MCP and triplex capsid protein 1/TRX1 at the pentamer vertices. Interacts with the large tegument protein/LTP.

The protein localises to the virion. The protein resides in the host nucleus. Functionally, capsid vertex-specific component that plays a role during viral DNA encapsidation, assuring correct genome cleavage and presumably stabilizing capsids that contain full-length viral genomes. Participates in the interaction between the capsid and the tegument through interaction with the large tegument protein/LTP. The protein is Capsid vertex component 2 of Equine herpesvirus 1 (strain Ab4p) (EHV-1).